Reading from the N-terminus, the 601-residue chain is NAD-dependent malic enzyme 59 kDa isoform, mitochondrial (601 aa).

The N-terminal 18 residues, 1–18, are a transit peptide targeting the mitochondrion; the sequence is MWRVARSAASTFRRTRRL. The Proton donor role is filled by Y129. R182 provides a ligand contact to NAD(+). Catalysis depends on K200, which acts as the Proton acceptor. Positions 271, 272, and 295 each coordinate a divalent metal cation. 2 residues coordinate NAD(+): D295 and N444.

The protein belongs to the malic enzymes family. As to quaternary structure, heterodimer of two related subunits. Mg(2+) serves as cofactor. The cofactor is Mn(2+).

It is found in the mitochondrion matrix. The enzyme catalyses (S)-malate + NAD(+) = pyruvate + CO2 + NADH. The chain is NAD-dependent malic enzyme 59 kDa isoform, mitochondrial from Solanum tuberosum (Potato).